Here is a 704-residue protein sequence, read N- to C-terminus: MAQDVLTDLNKVRNIGIMAHIDAGKTTTTERILFYTGVNHKIGETHDGASTTDWMEQEKERGITITSAAVTSFWNGNQINIIDTPGHVDFTVEVERSLRVLDGAVAVFDGKEGVEPQSETVWRQADKYEVPRICFVNKMDKLGADFYFTVDTIINRLGAKPLVIQLPIGAENDFVGVVDLLEMRALVWPGDSKGDVTMGAKYEVQEIPADLLEKAQEYRAALVEAAAEASEELMEKYLEGEELTVAELKAGIRKLTIASEIYPVLCGSAFKNRGVQPMLDAVVDFLPSPLDVPPMIGHDPRNEETEMTRKPSTDEPFSALAFKVATHPFFGQLVFIRVYSGQIASGTQVINSTKGKKERIGKLFQMHANKENPVEEALAGHIYAAIGLKDTTTGDTLADITNPIVLESMSFPEPVISVAIEPKTKGDQEKLSTAIQKLSAEDPTFRVNLDEDTGQTIIAGMGELHLDILVDRMRREFRVEANVGKPQVAYRETIRRKVEKHDYTHKKQTGGSGQFAKIQIAIEPFTSEEGVLYEFENKVTGGRVPREYIPSVDQGIQSALTDGVLAGYPVVGIKATLLDGAYHDVDSSEMAFKIAGRMAFKEAARKADPVLLEPLMEVEVRTPEEYMGDVIGDLNSRRGQMQSMEDASGVKVIRSLVPLSGMFGYIGDLRSKTQGRAVYSMQFDSYAEVPKAVSDEIIQKARGE.

In terms of domain architecture, tr-type G spans 10 to 290; it reads NKVRNIGIMA…AVVDFLPSPL (281 aa). GTP contacts are provided by residues 19 to 26, 83 to 87, and 137 to 140; these read AHIDAGKT, DTPGH, and NKMD. Residues 293–313 are disordered; it reads PPMIGHDPRNEETEMTRKPST. Residues 298–313 are compositionally biased toward basic and acidic residues; that stretch reads HDPRNEETEMTRKPST.

It belongs to the TRAFAC class translation factor GTPase superfamily. Classic translation factor GTPase family. EF-G/EF-2 subfamily.

It localises to the cytoplasm. Functionally, catalyzes the GTP-dependent ribosomal translocation step during translation elongation. During this step, the ribosome changes from the pre-translocational (PRE) to the post-translocational (POST) state as the newly formed A-site-bound peptidyl-tRNA and P-site-bound deacylated tRNA move to the P and E sites, respectively. Catalyzes the coordinated movement of the two tRNA molecules, the mRNA and conformational changes in the ribosome. In Renibacterium salmoninarum (strain ATCC 33209 / DSM 20767 / JCM 11484 / NBRC 15589 / NCIMB 2235), this protein is Elongation factor G.